Consider the following 313-residue polypeptide: Dimethyladenosine transferase (313 aa).

The interval 1–21 (MPKVKSGAIGRRRGRQEQRRE) is disordered. S-adenosyl-L-methionine contacts are provided by H37, L39, G64, E85, D113, and N128.

This sequence belongs to the class I-like SAM-binding methyltransferase superfamily. rRNA adenine N(6)-methyltransferase family. As to quaternary structure, part of the small subunit (SSU) processome, composed of more than 70 proteins and the RNA chaperone small nucleolar RNA (snoRNA) U3.

The protein localises to the nucleus. It localises to the nucleoplasm. It is found in the nucleolus. It catalyses the reaction adenosine(1779)/adenosine(1780) in 18S rRNA + 4 S-adenosyl-L-methionine = N(6)-dimethyladenosine(1779)/N(6)-dimethyladenosine(1780) in 18S rRNA + 4 S-adenosyl-L-homocysteine + 4 H(+). Its function is as follows. Specifically dimethylates two adjacent adenosines in the loop of a conserved hairpin near the 3'-end of 18S rRNA in the 40S particle. Involved in the pre-rRNA processing steps leading to small-subunit rRNA production independently of its RNA-modifying catalytic activity. Part of the small subunit (SSU) processome, first precursor of the small eukaryotic ribosomal subunit. During the assembly of the SSU processome in the nucleolus, many ribosome biogenesis factors, an RNA chaperone and ribosomal proteins associate with the nascent pre-rRNA and work in concert to generate RNA folding, modifications, rearrangements and cleavage as well as targeted degradation of pre-ribosomal RNA by the RNA exosome. The protein is Dimethyladenosine transferase (DIMT1) of Macaca fascicularis (Crab-eating macaque).